Here is a 155-residue protein sequence, read N- to C-terminus: MLP-like protein 423 (155 aa).

It belongs to the MLP family.

The protein is MLP-like protein 423 (MLP423) of Arabidopsis thaliana (Mouse-ear cress).